A 236-amino-acid polypeptide reads, in one-letter code: Translocon-associated protein subunit alpha (236 aa).

Residues 1–20 form the signal peptide; the sequence is MNKLITLLLAVLMIISCVYS. Over 21–163 the chain is Lumenal; the sequence is DDVEITDDEV…TEKETSFDMD (143 aa). N-linked (GlcNAc...) asparagine glycans are attached at residues Asn-74, Asn-94, Asn-141, Asn-148, and Asn-152. Residues 164–184 form a helical membrane-spanning segment; the sequence is SFFLILLGLGFVGGIGYIVYG. Over 185–236 the chain is Cytoplasmic; that stretch reads KMPKQKKVRTVSKVNKNAVRVETEDETAEWLSGTSAASSKVKSVQKVVKKNK.

It belongs to the TRAP-alpha family. In terms of assembly, heterotrimer of TRAP-alpha, TRAP-beta and TRAP-gamma. In terms of processing, phosphorylated in its cytoplasmic tail.

It is found in the endoplasmic reticulum membrane. TRAP proteins are part of a complex whose function is to bind calcium to the ER membrane and thereby regulate the retention of ER resident proteins. This is Translocon-associated protein subunit alpha (ssr1) from Dictyostelium discoideum (Social amoeba).